Consider the following 361-residue polypeptide: Phosphoserine aminotransferase (361 aa).

Arg-43 serves as a coordination point for L-glutamate. Residues 77–78, Trp-103, Thr-153, Asp-173, and Gln-196 contribute to the pyridoxal 5'-phosphate site; that span reads AS. Lys-197 carries the post-translational modification N6-(pyridoxal phosphate)lysine. Position 238–239 (238–239) interacts with pyridoxal 5'-phosphate; sequence NT.

The protein belongs to the class-V pyridoxal-phosphate-dependent aminotransferase family. SerC subfamily. In terms of assembly, homodimer. Requires pyridoxal 5'-phosphate as cofactor.

It localises to the cytoplasm. The catalysed reaction is O-phospho-L-serine + 2-oxoglutarate = 3-phosphooxypyruvate + L-glutamate. It catalyses the reaction 4-(phosphooxy)-L-threonine + 2-oxoglutarate = (R)-3-hydroxy-2-oxo-4-phosphooxybutanoate + L-glutamate. The protein operates within amino-acid biosynthesis; L-serine biosynthesis; L-serine from 3-phospho-D-glycerate: step 2/3. It participates in cofactor biosynthesis; pyridoxine 5'-phosphate biosynthesis; pyridoxine 5'-phosphate from D-erythrose 4-phosphate: step 3/5. Its function is as follows. Catalyzes the reversible conversion of 3-phosphohydroxypyruvate to phosphoserine and of 3-hydroxy-2-oxo-4-phosphonooxybutanoate to phosphohydroxythreonine. The sequence is that of Phosphoserine aminotransferase from Pseudomonas paraeruginosa (strain DSM 24068 / PA7) (Pseudomonas aeruginosa (strain PA7)).